A 260-amino-acid polypeptide reads, in one-letter code: Small ribosomal subunit protein uS2 (260 aa).

It belongs to the universal ribosomal protein uS2 family.

The polypeptide is Small ribosomal subunit protein uS2 (rpsB) (Borreliella burgdorferi (strain ATCC 35210 / DSM 4680 / CIP 102532 / B31) (Borrelia burgdorferi)).